The following is a 132-amino-acid chain: L-ectoine synthase (132 aa).

The protein belongs to the ectoine synthase family.

It carries out the reaction (2S)-4-acetamido-2-aminobutanoate = L-ectoine + H2O. Its pathway is amine and polyamine biosynthesis; ectoine biosynthesis; L-ectoine from L-aspartate 4-semialdehyde: step 3/3. Catalyzes the circularization of gamma-N-acetyl-alpha,gamma-diaminobutyric acid (ADABA) to ectoine (1,4,5,6-tetrahydro-2-methyl-4-pyrimidine carboxylic acid), which is an excellent osmoprotectant. The sequence is that of L-ectoine synthase from Alkalilimnicola ehrlichii (strain ATCC BAA-1101 / DSM 17681 / MLHE-1).